The primary structure comprises 144 residues: Large ribosomal subunit protein uL15 (144 aa).

A compositionally biased stretch (polar residues) spans 1 to 10 (MYLNTISPSR). The segment at 1–51 (MYLNTISPSRGSKHLSKRVGRGIGSGLGKTGGRGHKGQKSRSGGKVRLGFE) is disordered. Residues 11-20 (GSKHLSKRVG) are compositionally biased toward basic residues. Residues 21 to 31 (RGIGSGLGKTG) show a composition bias toward gly residues. Residues 32–44 (GRGHKGQKSRSGG) are compositionally biased toward basic residues.

The protein belongs to the universal ribosomal protein uL15 family. As to quaternary structure, part of the 50S ribosomal subunit.

Binds to the 23S rRNA. The protein is Large ribosomal subunit protein uL15 of Blochmanniella pennsylvanica (strain BPEN).